We begin with the raw amino-acid sequence, 355 residues long: UDP-N-acetylglucosamine--N-acetylmuramyl-(pentapeptide) pyrophosphoryl-undecaprenol N-acetylglucosamine transferase (355 aa).

UDP-N-acetyl-alpha-D-glucosamine is bound by residues 14 to 16 (TGG), Asn-126, Arg-162, Ser-190, Ile-243, 262 to 267 (ALTVSE), and Gln-287.

Belongs to the glycosyltransferase 28 family. MurG subfamily.

It localises to the cell inner membrane. It catalyses the reaction di-trans,octa-cis-undecaprenyl diphospho-N-acetyl-alpha-D-muramoyl-L-alanyl-D-glutamyl-meso-2,6-diaminopimeloyl-D-alanyl-D-alanine + UDP-N-acetyl-alpha-D-glucosamine = di-trans,octa-cis-undecaprenyl diphospho-[N-acetyl-alpha-D-glucosaminyl-(1-&gt;4)]-N-acetyl-alpha-D-muramoyl-L-alanyl-D-glutamyl-meso-2,6-diaminopimeloyl-D-alanyl-D-alanine + UDP + H(+). It participates in cell wall biogenesis; peptidoglycan biosynthesis. In terms of biological role, cell wall formation. Catalyzes the transfer of a GlcNAc subunit on undecaprenyl-pyrophosphoryl-MurNAc-pentapeptide (lipid intermediate I) to form undecaprenyl-pyrophosphoryl-MurNAc-(pentapeptide)GlcNAc (lipid intermediate II). In Vibrio parahaemolyticus serotype O3:K6 (strain RIMD 2210633), this protein is UDP-N-acetylglucosamine--N-acetylmuramyl-(pentapeptide) pyrophosphoryl-undecaprenol N-acetylglucosamine transferase.